Here is a 121-residue protein sequence, read N- to C-terminus: Ribonuclease P protein component (121 aa).

The protein belongs to the RnpA family. In terms of assembly, consists of a catalytic RNA component (M1 or rnpB) and a protein subunit.

It carries out the reaction Endonucleolytic cleavage of RNA, removing 5'-extranucleotides from tRNA precursor.. In terms of biological role, RNaseP catalyzes the removal of the 5'-leader sequence from pre-tRNA to produce the mature 5'-terminus. It can also cleave other RNA substrates such as 4.5S RNA. The protein component plays an auxiliary but essential role in vivo by binding to the 5'-leader sequence and broadening the substrate specificity of the ribozyme. The chain is Ribonuclease P protein component from Neisseria meningitidis serogroup A / serotype 4A (strain DSM 15465 / Z2491).